The chain runs to 209 residues: Protein ASG7 (209 aa).

Topologically, residues 1 to 49 (MTTLASSIEHKTKHLAAPFENDENTWMKKYCCQCKSCKMSVPVQPWLPR) are lumenal. A helical membrane pass occupies residues 50–70 (FFVFGILCPVFWLVNLLAWWF). At 71–184 (LQYWQPHELE…LLRKTFRNWN (114 aa)) the chain is on the cytoplasmic side. A phosphoserine mark is found at serine 121, serine 123, and serine 125. Threonine 153 is subject to Phosphothreonine. A helical membrane pass occupies residues 185-205 (LRSLLGLLIDSILIIFVVLLC). Topologically, residues 206-209 (KKSR) are lumenal.

It is found in the endomembrane system. Functionally, required for receptor inhibition of inappropriately expressed a-factor receptor (STE3) in MAT a cells. Inhibits signaling by relocalizing the G protein beta-gamma (STE4-STE18) subunit to intracellular membranes. May also be a mechanism for the down-regulation of the mating pheromone response after the zygotic fusion event, promoting the transition of the new diploid cell to vegetative growth. The protein is Protein ASG7 (ASG7) of Saccharomyces cerevisiae (strain YJM789) (Baker's yeast).